A 107-amino-acid polypeptide reads, in one-letter code: L-rhamnose mutarotase (107 aa).

Tyr21 provides a ligand contact to substrate. His25 (proton donor) is an active-site residue. Substrate-binding positions include Tyr44 and 79–80 (WW).

It belongs to the rhamnose mutarotase family. Homodimer.

It localises to the cytoplasm. It catalyses the reaction alpha-L-rhamnose = beta-L-rhamnose. It functions in the pathway carbohydrate metabolism; L-rhamnose metabolism. Its function is as follows. Involved in the anomeric conversion of L-rhamnose. The protein is L-rhamnose mutarotase of Agrobacterium fabrum (strain C58 / ATCC 33970) (Agrobacterium tumefaciens (strain C58)).